Consider the following 117-residue polypeptide: uncharacterized protein (117 aa).

This is an uncharacterized protein from Homo sapiens (Human).